The chain runs to 185 residues: Lysozyme g (185 aa).

Disulfide bonds link Cys4-Cys60 and Cys18-Cys29. The active site involves Glu73.

The protein belongs to the glycosyl hydrolase 23 family.

Its subcellular location is the secreted. The catalysed reaction is Hydrolysis of (1-&gt;4)-beta-linkages between N-acetylmuramic acid and N-acetyl-D-glucosamine residues in a peptidoglycan and between N-acetyl-D-glucosamine residues in chitodextrins.. In Cygnus atratus (Black swan), this protein is Lysozyme g.